The sequence spans 272 residues: Indole-3-glycerol phosphate synthase (272 aa).

Belongs to the TrpC family.

It catalyses the reaction 1-(2-carboxyphenylamino)-1-deoxy-D-ribulose 5-phosphate + H(+) = (1S,2R)-1-C-(indol-3-yl)glycerol 3-phosphate + CO2 + H2O. Its pathway is amino-acid biosynthesis; L-tryptophan biosynthesis; L-tryptophan from chorismate: step 4/5. The chain is Indole-3-glycerol phosphate synthase from Mycobacterium tuberculosis (strain ATCC 25177 / H37Ra).